Here is a 257-residue protein sequence, read N- to C-terminus: Lipid A 4'-phosphatase (257 aa).

6 helical membrane-spanning segments follow: residues 21 to 41 (FGAFLLLFWTWWALLAVFRAF), 85 to 105 (IFFRLPYVVAIVMAWKLIECY), 119 to 139 (KLKVGLGALLIGPVLLVNVIL), 174 to 194 (CSFVSGEAASAGWLFCLLLFV), 201 to 221 (ALVPPVAAISILTPAMRLSFG), and 225 to 245 (LSDVTLGWLSSLVVFAALLAL).

Belongs to the lipid A LpxF 4'-phosphatase family.

It is found in the cell inner membrane. It participates in bacterial outer membrane biogenesis; LPS lipid A biosynthesis. Its function is as follows. Probably removes the 4'-phosphate moiety from lipid A species. Not seen to act on other membrane components, nor does it dephosphorylate the 1-phosphate group of lipid A and/or lipid A precursors. The protein is Lipid A 4'-phosphatase of Rhizobium etli (strain ATCC 51251 / DSM 11541 / JCM 21823 / NBRC 15573 / CFN 42).